We begin with the raw amino-acid sequence, 200 residues long: MKLDMTGDCTPVLVLMAAVLTVTGAVPVARLHGALPDARGCHIAQFKSLSPQELQAFKRAKDALEESLLLKDCRCHSRLFPRTWDLRQLQVRERPMALEAELALTLKVLEATADTDPALVDVLDQPLHTLHHILSQFRACIQPQPTAGPRTRGRLHHWLYRLQEAPKKESPGCLEASVTFNLFRLLTRDLNCVASGDLCV.

An N-terminal signal peptide occupies residues 1 to 25 (MKLDMTGDCTPVLVLMAAVLTVTGA).

This sequence belongs to the lambda interferon family.

It localises to the secreted. Its function is as follows. Cytokine with antiviral, antitumour and immunomodulatory activities. Plays a critical role in the antiviral host defense, predominantly in the epithelial tissues. Acts as a ligand for the heterodimeric class II cytokine receptor composed of IL10RB and IFNLR1, and receptor engagement leads to the activation of the JAK/STAT signaling pathway resulting in the expression of IFN-stimulated genes (ISG), which mediate the antiviral state. Has a restricted receptor distribution and therefore restricted targets: is primarily active in epithelial cells and this cell type-selective action is because of the epithelial cell-specific expression of its receptor IFNLR1. Seems not to be essential for early virus-activated host defense in vaginal infection, but plays an important role in Toll-like receptor (TLR)-induced antiviral defense. Plays a significant role in the antiviral immune defense in the intestinal epithelium. Exerts an immunomodulatory effect by up-regulating MHC class I antigen expression. The protein is Interferon lambda-2 (IFNL2) of Homo sapiens (Human).